The primary structure comprises 1031 residues: Semaphorin-6A (1031 aa).

Residues 1–18 (MRPAALLLCLTLLHCAGA) form the signal peptide. The Extracellular portion of the chain corresponds to 19 to 649 (GFPEDSEPIS…KSNDQLVPVT (631 aa)). A Sema domain is found at 24–512 (SEPISISHGN…FSTCVIKVPL (489 aa)). 3 N-linked (GlcNAc...) asparagine glycosylation sites follow: asparagine 33, asparagine 49, and asparagine 65. 4 cysteine pairs are disulfide-bonded: cysteine 107–cysteine 117, cysteine 135–cysteine 144, cysteine 258–cysteine 369, and cysteine 283–cysteine 328. The N-linked (GlcNAc...) asparagine glycan is linked to asparagine 282. N-linked (GlcNAc...) asparagine glycosylation is found at asparagine 434 and asparagine 461. Disulfide bonds link cysteine 477–cysteine 506, cysteine 515–cysteine 533, cysteine 521–cysteine 568, and cysteine 525–cysteine 542. Residues 650–670 (LLAIAVILAFVMGAVFSGIIV) form a helical membrane-spanning segment. Over 671–1031 (YCVCDHRRKD…TSMKPNDACT (361 aa)) the chain is Cytoplasmic. Serine 698 carries the phosphoserine modification. Disordered regions lie at residues 754 to 777 (ALPT…SREW), 861 to 902 (SSKS…TGLS), and 914 to 1031 (GLEY…DACT). Residues 921–931 (YPTNSLTRSHQ) are compositionally biased toward polar residues. Low complexity predominate over residues 932 to 951 (TTTLKRNNTNSSNSSHLSRN). A Phosphoserine modification is found at serine 953. Composition is skewed to polar residues over residues 971–998 (QVHS…SLTR) and 1019–1031 (PLST…DACT).

This sequence belongs to the semaphorin family. Active as a homodimer or oligomer. The SEMA6A homodimer interacts with a PLXNA2 homodimer, giving rise to a heterotetramer. Interacts with EVL. In terms of tissue distribution, particularly high levels in spinal cord, cerebellum, metencephalon, superior and inferior colliculus, diencephalon, olfactory bulb and eye.

It is found in the cell membrane. Its function is as follows. Cell surface receptor for PLXNA2 that plays an important role in cell-cell signaling. Required for normal granule cell migration in the developing cerebellum. Promotes reorganization of the actin cytoskeleton and plays an important role in axon guidance in the developing central nervous system. Can act as repulsive axon guidance cue. Has repulsive action towards migrating granular neurons. May play a role in channeling sympathetic axons into the sympathetic chains and controlling the temporal sequence of sympathetic target innervation. The protein is Semaphorin-6A (Sema6a) of Mus musculus (Mouse).